A 708-amino-acid polypeptide reads, in one-letter code: Ribosomal RNA large subunit methyltransferase K/L (708 aa).

A THUMP domain is found at 43 to 154 (QGYQITLWTR…RGKITIGINF (112 aa)).

It belongs to the methyltransferase superfamily. RlmKL family.

The protein localises to the cytoplasm. It catalyses the reaction guanosine(2445) in 23S rRNA + S-adenosyl-L-methionine = N(2)-methylguanosine(2445) in 23S rRNA + S-adenosyl-L-homocysteine + H(+). The enzyme catalyses guanosine(2069) in 23S rRNA + S-adenosyl-L-methionine = N(2)-methylguanosine(2069) in 23S rRNA + S-adenosyl-L-homocysteine + H(+). Functionally, specifically methylates the guanine in position 2445 (m2G2445) and the guanine in position 2069 (m7G2069) of 23S rRNA. This is Ribosomal RNA large subunit methyltransferase K/L from Shewanella amazonensis (strain ATCC BAA-1098 / SB2B).